A 461-amino-acid polypeptide reads, in one-letter code: tRNA modification GTPase MnmE (461 aa).

3 residues coordinate (6S)-5-formyl-5,6,7,8-tetrahydrofolate: Lys-32, Glu-89, and Lys-128. Residues 224–387 form the TrmE-type G domain; sequence GHALSIVGKP…LSQKISEFFP (164 aa). Asn-234 contacts K(+). Residues 234 to 239, 253 to 259, and 278 to 281 each bind GTP; these read NAGKSS, SDIKGTT, and DTAG. Ser-238 is a binding site for Mg(2+). Residues Ser-253, Ile-255, and Thr-258 each contribute to the K(+) site. Position 259 (Thr-259) interacts with Mg(2+). Lys-461 serves as a coordination point for (6S)-5-formyl-5,6,7,8-tetrahydrofolate.

Belongs to the TRAFAC class TrmE-Era-EngA-EngB-Septin-like GTPase superfamily. TrmE GTPase family. As to quaternary structure, homodimer. Heterotetramer of two MnmE and two MnmG subunits. It depends on K(+) as a cofactor.

It is found in the cytoplasm. Exhibits a very high intrinsic GTPase hydrolysis rate. Involved in the addition of a carboxymethylaminomethyl (cmnm) group at the wobble position (U34) of certain tRNAs, forming tRNA-cmnm(5)s(2)U34. The chain is tRNA modification GTPase MnmE from Helicobacter pylori (strain J99 / ATCC 700824) (Campylobacter pylori J99).